We begin with the raw amino-acid sequence, 262 residues long: Ribosomal RNA small subunit methyltransferase A (262 aa).

Residues I18, G43, E65, D91, and N110 each contribute to the S-adenosyl-L-methionine site.

The protein belongs to the class I-like SAM-binding methyltransferase superfamily. rRNA adenine N(6)-methyltransferase family. RsmA subfamily.

The protein resides in the cytoplasm. The enzyme catalyses adenosine(1518)/adenosine(1519) in 16S rRNA + 4 S-adenosyl-L-methionine = N(6)-dimethyladenosine(1518)/N(6)-dimethyladenosine(1519) in 16S rRNA + 4 S-adenosyl-L-homocysteine + 4 H(+). In terms of biological role, specifically dimethylates two adjacent adenosines (A1518 and A1519) in the loop of a conserved hairpin near the 3'-end of 16S rRNA in the 30S particle. May play a critical role in biogenesis of 30S subunits. In Ehrlichia canis (strain Jake), this protein is Ribosomal RNA small subunit methyltransferase A.